We begin with the raw amino-acid sequence, 195 residues long: MAPPVRYCIPGERLCNLEEGSPGSGTYTRHGYIFSSLAGCLMKTSENGAVPVVSVMRETESQLLPDVGAVVTCKVSSINSRFAKVHILYVGSTPLKNAFRGTIRKEDIRATEKDKVEIYKSFRPGDIVLAKVISLGDAQSNYLLTTAENELGVVVAHSESGVQMVPISWCEMQCPKTHTKEFRKVARVQPEFLQT.

Ser21 bears the Phosphoserine mark. In terms of domain architecture, S1 motif spans 66–147; it reads DVGAVVTCKV…AQSNYLLTTA (82 aa).

This sequence belongs to the CSL4 family. In terms of assembly, component of the RNA exosome core complex (Exo-9), composed of EXOSC1, EXOSC2, EXOSC3, EXOSC4, EXOSC5, EXOSC6, EXOSC7, EXOSC8 and EXOSC9; within the complex interacts with EXOSC6. The catalytically inactive RNA exosome core complex (Exo-9) associates with the catalytic subunit EXOSC10/RRP6. Exo-9 may associate with DIS3 to form the nucleolar exosome complex, or DIS3L to form the cytoplasmic exosome complex. Exo-9 is formed by a hexameric base ring consisting of the heterodimers EXOSC4-EXOSC9, EXOSC5-EXOSC8 and EXOSC6-EXOSC7, and a cap ring consisting of EXOSC1, EXOSC2 and EXOSC3. The RNA exosome complex associates with cofactors C1D/RRP47, MPHOSPH6/MPP6 and MTREX/MTR4. Interacts with DDX60.

The protein localises to the nucleus. The protein resides in the nucleolus. It localises to the cytoplasm. Non-catalytic component of the RNA exosome complex which has 3'-&gt;5' exoribonuclease activity and participates in a multitude of cellular RNA processing and degradation events. In the nucleus, the RNA exosome complex is involved in proper maturation of stable RNA species such as rRNA, snRNA and snoRNA, in the elimination of RNA processing by-products and non-coding 'pervasive' transcripts, such as antisense RNA species and promoter-upstream transcripts (PROMPTs), and of mRNAs with processing defects, thereby limiting or excluding their export to the cytoplasm. The RNA exosome may be involved in Ig class switch recombination (CSR) and/or Ig variable region somatic hypermutation (SHM) by targeting AICDA deamination activity to transcribed dsDNA substrates. In the cytoplasm, the RNA exosome complex is involved in general mRNA turnover and specifically degrades inherently unstable mRNAs containing AU-rich elements (AREs) within their 3' untranslated regions, and in RNA surveillance pathways, preventing translation of aberrant mRNAs. It seems to be involved in degradation of histone mRNA. The catalytic inactive RNA exosome core complex of 9 subunits (Exo-9) is proposed to play a pivotal role in the binding and presentation of RNA for ribonucleolysis, and to serve as a scaffold for the association with catalytic subunits and accessory proteins or complexes. EXOSC1 as peripheral part of the Exo-9 complex stabilizes the hexameric ring of RNase PH-domain subunits through contacts with EXOSC6 and EXOSC8. This is Exosome complex component CSL4 (Exosc1) from Mus musculus (Mouse).